The sequence spans 727 residues: Cyclin-T1 (727 aa).

The residue at position 117 (S117) is a Phosphoserine. A Nuclear localization signal motif is present at residues K253–D270. A Glycyl lysine isopeptide (Lys-Gly) (interchain with G-Cter in SUMO2) cross-link involves residue K343. S389 is modified (phosphoserine). Positions S389–A420 form a coiled coil. K391 is modified (N6-acetyllysine). K416 participates in a covalent cross-link: Glycyl lysine isopeptide (Lys-Gly) (interchain with G-Cter in SUMO2). ADP-ribosylserine occurs at positions 417 and 475. The tract at residues I481–Q551 is histidine-rich domain (HRD). Residue K482 forms a Glycyl lysine isopeptide (Lys-Gly) (interchain with G-Cter in SUMO2) linkage. Residue K486 is modified to N6-(ADP-ribosyl)lysine. A compositionally biased stretch (basic and acidic residues) spans V487–H507. 2 disordered regions span residues V487–C631 and Y691–K727. H488 carries the post-translational modification ADP-ribosylhistidine. Phosphoserine occurs at positions 496 and 500. Residues K508–H531 show a composition bias toward basic residues. The residue at position 531 (H531) is an ADP-ribosylhistidine. 3 positions are modified to ADP-ribosylserine: S532, S550, and S553. H557 bears the ADP-ribosylhistidine mark. Positions S561–S571 are enriched in low complexity. The residue at position 564 (S564) is an ADP-ribosylserine. S565 is modified (phosphoserine). Residues G616 to C631 are compositionally biased toward polar residues. The segment covering P711–K727 has biased composition (pro residues).

It belongs to the cyclin family. Cyclin C subfamily. As to quaternary structure, cyclin-T1 is the predominant cyclin that associates with CDK9 to form a heterodimer called P-TEFb. P-TEFb forms a complex with AFF4/AF5Q31. Component of a complex which is at least composed of HTATSF1/Tat-SF1, P-TEFb complex, RNA pol II, SUPT5H, and NCL/nucleolin. Component of the 7SK snRNP complex at least composed of P-TEFb (composed of CDK9 and CCNT1/cyclin-T1), HEXIM1, HEXIM2, BCDIN3, SART3 proteins and 7SK and U6 snRNAs. Interacts (via central region) with ZMYND8 (via N-terminus); the interaction is direct and the association appears to occur between homodimeric ZMYND8 and the activated form of the P-TEFb complex. Interacts with BRD4, targets chromatin binding. Interacts with JMJD6. Interacts with MDFIC. Interacts with HSF1. Interacts with HTATSF1. Interacts with TBX21. (Microbial infection) Binds to BIV Tat, however Tat binds TAR RNA in a Cyc-T1-independent mode. In terms of processing, ADP-ribosylation on serine residues by PARP1 in response to DNA damage disrupts the phase separation activity of CCNT1, thereby preventing activation of CDK9.

It localises to the nucleus. In terms of biological role, regulatory subunit of the cyclin-dependent kinase pair (CDK9/cyclin-T1) complex, also called positive transcription elongation factor B (P-TEFb), which facilitates the transition from abortive to productive elongation by phosphorylating the CTD (C-terminal domain) of the large subunit of RNA polymerase II (RNA Pol II). Required to activate the protein kinase activity of CDK9: acts by mediating formation of liquid-liquid phase separation (LLPS) that enhances binding of P-TEFb to the CTD of RNA Pol II. The protein is Cyclin-T1 (CCNT1) of Bos taurus (Bovine).